We begin with the raw amino-acid sequence, 216 residues long: MITVALAKGALLKDSVARFAAAGLDFSAVLDKDNRQLMVPTPCGRARALLVRNGDVPTYVSYGQAQLGVVGYDVLKEHQLPVAQLVDLGFGGCRMSVAVKASSGYQRALDLPAHCRVASKFTHCAREYFDSLDLPVELVHLNGSVELGPITGMSEAIVDLVATGRTLRDNGLVEIEELFRSSARLVGHPLSMRLDDGALTEIVTAIRAVEPSKGEA.

This sequence belongs to the ATP phosphoribosyltransferase family. Short subfamily. In terms of assembly, heteromultimer composed of HisG and HisZ subunits.

Its subcellular location is the cytoplasm. The enzyme catalyses 1-(5-phospho-beta-D-ribosyl)-ATP + diphosphate = 5-phospho-alpha-D-ribose 1-diphosphate + ATP. It functions in the pathway amino-acid biosynthesis; L-histidine biosynthesis; L-histidine from 5-phospho-alpha-D-ribose 1-diphosphate: step 1/9. Catalyzes the condensation of ATP and 5-phosphoribose 1-diphosphate to form N'-(5'-phosphoribosyl)-ATP (PR-ATP). Has a crucial role in the pathway because the rate of histidine biosynthesis seems to be controlled primarily by regulation of HisG enzymatic activity. This chain is ATP phosphoribosyltransferase, found in Synechococcus sp. (strain CC9902).